Here is a 166-residue protein sequence, read N- to C-terminus: MRCPFCGFSDSRVLDSRPTVEGNSIRRRRECCGCSKRFTTYERVDEPSLIVVKKDGRREAFHRQKLLQGLIKACQKRPVSTEKLEAIVDGIERELRQTMEPEIKSQYIGELVMERLRKLDEVAYVRFASVYREFRDAESFMEELKNLLEKNREGLRGGPGDHVQDH.

Residues 3–34 fold into a zinc finger; that stretch reads CPFCGFSDSRVLDSRPTVEGNSIRRRRECCGC. The 91-residue stretch at 49–139 folds into the ATP-cone domain; it reads LIVVKKDGRR…VYREFRDAES (91 aa).

This sequence belongs to the NrdR family. Zn(2+) is required as a cofactor.

Functionally, negatively regulates transcription of bacterial ribonucleotide reductase nrd genes and operons by binding to NrdR-boxes. The polypeptide is Transcriptional repressor NrdR (Pelotomaculum thermopropionicum (strain DSM 13744 / JCM 10971 / SI)).